The sequence spans 225 residues: Golgi to ER traffic protein 1 (225 aa).

Residue Met-1 is a topological domain, lumenal. The chain crosses the membrane as a helical span at residues Asn-2 to Thr-21. Residues Ser-22–Lys-107 lie on the Cytoplasmic side of the membrane. Positions Asp-37 to Asn-104 form a coiled coil. A helical membrane pass occupies residues Leu-108–Tyr-128. The Lumenal portion of the chain corresponds to Asp-129 to Gly-172. The chain crosses the membrane as a helical span at residues Val-173 to Val-189. Residues Glu-190–Asp-225 lie on the Cytoplasmic side of the membrane.

The protein belongs to the WRB/GET1 family. As to quaternary structure, component of the Golgi to ER traffic (GET) complex, which is composed of GET1, GET2 and GET3. Within the complex, GET1 and GET2 form a heterotetramer which is stabilized by phosphatidylinositol binding and which binds to the GET3 homodimer.

The protein resides in the endoplasmic reticulum membrane. The protein localises to the golgi apparatus membrane. Its function is as follows. Required for the post-translational delivery of tail-anchored (TA) proteins to the endoplasmic reticulum. Together with GET2, acts as a membrane receptor for soluble GET3, which recognizes and selectively binds the transmembrane domain of TA proteins in the cytosol. The GET complex cooperates with the HDEL receptor ERD2 to mediate the ATP-dependent retrieval of resident ER proteins that contain a C-terminal H-D-E-L retention signal from the Golgi to the ER. This is Golgi to ER traffic protein 1 from Vanderwaltozyma polyspora (strain ATCC 22028 / DSM 70294 / BCRC 21397 / CBS 2163 / NBRC 10782 / NRRL Y-8283 / UCD 57-17) (Kluyveromyces polysporus).